The following is a 238-amino-acid chain: Ribonuclease PH (238 aa).

Residues arginine 86 and 124 to 126 (GTR) each bind phosphate.

The protein belongs to the RNase PH family. In terms of assembly, homohexameric ring arranged as a trimer of dimers.

It catalyses the reaction tRNA(n+1) + phosphate = tRNA(n) + a ribonucleoside 5'-diphosphate. Functionally, phosphorolytic 3'-5' exoribonuclease that plays an important role in tRNA 3'-end maturation. Removes nucleotide residues following the 3'-CCA terminus of tRNAs; can also add nucleotides to the ends of RNA molecules by using nucleoside diphosphates as substrates, but this may not be physiologically important. Probably plays a role in initiation of 16S rRNA degradation (leading to ribosome degradation) during starvation. This Haemophilus ducreyi (strain 35000HP / ATCC 700724) protein is Ribonuclease PH.